The following is a 418-amino-acid chain: Diaminopimelate decarboxylase (418 aa).

N6-(pyridoxal phosphate)lysine is present on K53. Pyridoxal 5'-phosphate-binding positions include G223 and 264–267 (EPGR). Substrate contacts are provided by R267, R303, and Y307. Catalysis depends on C338, which acts as the Proton donor. Positions 339 and 374 each coordinate substrate. Y374 contributes to the pyridoxal 5'-phosphate binding site.

Belongs to the Orn/Lys/Arg decarboxylase class-II family. LysA subfamily. As to quaternary structure, homodimer. Pyridoxal 5'-phosphate serves as cofactor.

The catalysed reaction is meso-2,6-diaminopimelate + H(+) = L-lysine + CO2. It participates in amino-acid biosynthesis; L-lysine biosynthesis via DAP pathway; L-lysine from DL-2,6-diaminopimelate: step 1/1. Specifically catalyzes the decarboxylation of meso-diaminopimelate (meso-DAP) to L-lysine. This chain is Diaminopimelate decarboxylase, found in Buchnera aphidicola subsp. Baizongia pistaciae (strain Bp).